The primary structure comprises 1307 residues: Rab3 GTPase-activating protein regulatory subunit (1307 aa).

The protein belongs to the Rab3-GAP regulatory subunit family. In terms of assembly, the Rab3 GTPase-activating complex is a heterodimer composed of rbg-1 and rbg-2.

The protein localises to the cytoplasm. Functionally, probable regulatory subunit of a GTPase activating protein that has specificity for Rab3 subfamily. Rab3 proteins are involved in regulated exocytosis of neurotransmitters and hormones. Rab3 GTPase-activating complex specifically converts active Rab3-GTP to the inactive form Rab3-GDP. The chain is Rab3 GTPase-activating protein regulatory subunit (rbg-2) from Caenorhabditis elegans.